The chain runs to 1162 residues: Glycerophosphocholine phosphodiesterase GDE1 (1162 aa).

The region spanning Met1–Val155 is the SPX domain. 6 ANK repeats span residues Tyr346 to Leu375, Glu392 to Leu421, Cys423 to Tyr452, Arg458 to Ile487, Phe492 to Ile521, and Ser525 to Leu554. Residues Thr817–Leu1146 form the GP-PDE domain.

The protein belongs to the GDE1 family.

It is found in the cytoplasm. It carries out the reaction sn-glycerol 3-phosphocholine + H2O = sn-glycerol 3-phosphate + choline + H(+). Its function is as follows. Glycerophosphocholine glycerophosphodiesterase responsible for the hydrolysis of intracellular glycerophosphocholine into glycerol-phosphate and choline. The choline is used for phosphatidyl-choline synthesis. Required for utilization of glycerophosphocholine as phosphate source. C.albicans can utilize GroPCho through transport and intracellular hydrolysis or through extracellular hydrolysis. The polypeptide is Glycerophosphocholine phosphodiesterase GDE1 (Candida albicans (strain SC5314 / ATCC MYA-2876) (Yeast)).